The sequence spans 927 residues: Huntington interacting protein related 1 (927 aa).

The ENTH domain maps to 7–136; it reads AREVFVRAQL…TFHNKYPVVP (130 aa). Residues 336–524 are a coiled coil; that stretch reads RAVEDEKFAK…RESHANQLVQ (189 aa). The I/LWEQ domain occupies 673 to 914; that stretch reads QTDIDKDVVG…ALRKQHYHMA (242 aa).

Belongs to the SLA2 family.

Its subcellular location is the cytoplasm. The protein localises to the cytoskeleton. Its function is as follows. Regulates pre-synaptic vesicle recycling at neuromuscular junctions of mechanosensory neurons. Plays a role in maintaining a normal defecation cycle. This is Huntington interacting protein related 1 (hipr-1) from Caenorhabditis elegans.